A 509-amino-acid polypeptide reads, in one-letter code: Angiopoietin-4 (509 aa).

An N-terminal signal peptide occupies residues 1–21; sequence MLCQPAMLLDGLLLLATMAAA. Residues N105, N135, N149, N167, N256, N306, N317, and N417 are each glycosylated (N-linked (GlcNAc...) asparagine). Residues 181 to 269 adopt a coiled-coil conformation; the sequence is LSTNKLERQM…LQQQQQQLTE (89 aa). One can recognise a Fibrinogen C-terminal domain in the interval 288–508; that stretch reads KTPKPVFQDC…GTRMMLRPMG (221 aa). C297 and C326 are joined by a disulfide. Residues 416–436 form a disordered region; that stretch reads VNDSSSSAGRKNSLAPQGTKF. Cysteines 450 and 463 form a disulfide.

In terms of assembly, homodimer; disulfide-linked. Interacts with TEK/TIE2. As to expression, widely expressed.

The protein resides in the secreted. Binds to TEK/TIE2, modulating ANGPT1 signaling. Can induce tyrosine phosphorylation of TEK/TIE2. Promotes endothelial cell survival, migration and angiogenesis. The polypeptide is Angiopoietin-4 (Angpt4) (Mus musculus (Mouse)).